Reading from the N-terminus, the 199-residue chain is NAD(P)H dehydrogenase (quinone) (199 aa).

Residues 4 to 190 (VLVLYYSAYG…AGARYQGRRV (187 aa)) enclose the Flavodoxin-like domain. FMN is bound by residues 10-15 (SAYGHI) and 78-80 (TRF). Tyrosine 12 provides a ligand contact to NAD(+). Position 98 (tryptophan 98) interacts with substrate. FMN-binding positions include 113–119 (STATQHG) and histidine 134.

The protein belongs to the WrbA family. FMN serves as cofactor.

The enzyme catalyses a quinone + NADH + H(+) = a quinol + NAD(+). It carries out the reaction a quinone + NADPH + H(+) = a quinol + NADP(+). The protein is NAD(P)H dehydrogenase (quinone) of Methylocella silvestris (strain DSM 15510 / CIP 108128 / LMG 27833 / NCIMB 13906 / BL2).